A 507-amino-acid polypeptide reads, in one-letter code: Prolyl carboxy peptidase like protein 5 (507 aa).

A signal peptide spans 1 to 16; it reads MNIFISLAILIATTHC. An N-linked (GlcNAc...) asparagine glycan is attached at asparagine 125. The active-site Charge relay system is the serine 172. Asparagine 332 and asparagine 407 each carry an N-linked (GlcNAc...) asparagine glycan. Active-site charge relay system residues include aspartate 439 and histidine 466.

The protein belongs to the peptidase S28 family.

The chain is Prolyl carboxy peptidase like protein 5 from Caenorhabditis elegans.